The primary structure comprises 359 residues: Peptide chain release factor 1 (359 aa).

Gln235 carries the post-translational modification N5-methylglutamine.

This sequence belongs to the prokaryotic/mitochondrial release factor family. In terms of processing, methylated by PrmC. Methylation increases the termination efficiency of RF1.

It localises to the cytoplasm. Peptide chain release factor 1 directs the termination of translation in response to the peptide chain termination codons UAG and UAA. The sequence is that of Peptide chain release factor 1 from Aromatoleum aromaticum (strain DSM 19018 / LMG 30748 / EbN1) (Azoarcus sp. (strain EbN1)).